The following is a 1377-amino-acid chain: Zinc finger MYM-type protein 2 (1377 aa).

Glycyl lysine isopeptide (Lys-Gly) (interchain with G-Cter in SUMO2) cross-links involve residues Lys48, Lys88, Lys98, and Lys104. 2 stretches are compositionally biased toward polar residues: residues 85-115 (TSSKNEELQGNDSKITPSSKELASQKGSVSE) and 127-138 (TNQGQEKNSSNF). The segment at 85–177 (TSSKNEELQG…GMGNSGITTE (93 aa)) is disordered. The segment covering 139–152 (IERRPPETKNRTND) has biased composition (basic and acidic residues). Lys147 is covalently cross-linked (Glycyl lysine isopeptide (Lys-Gly) (interchain with G-Cter in SUMO2)). Residues 153-164 (VDFSTSSFSRSK) are compositionally biased toward polar residues. Position 159 is a phosphoserine (Ser159). Glycyl lysine isopeptide (Lys-Gly) (interchain with G-Cter in SUMO2) cross-links involve residues Lys253 and Lys297. A disordered region spans residues 273 to 305 (NGESATHHNPDSWISQSASFPRNQKQPGVDSLS). Residues 284–298 (SWISQSASFPRNQKQ) are compositionally biased toward polar residues. At Ser305 the chain carries Phosphoserine. Residues Lys312, Lys325, Lys348, and Lys366 each participate in a glycyl lysine isopeptide (Lys-Gly) (interchain with G-Cter in SUMO2) cross-link. Residues 327-363 (VKVTCANCKKPLQKGQTAYQRKGSAHLFCSTTCLSSF) form an MYM-type 1 zinc finger. Residues 369 to 409 (PKKLCVMCKKDITTMKGTIVAQVDSSESFQEFCSTSCLSLY) form an MYM-type 2 zinc finger. Glycyl lysine isopeptide (Lys-Gly) (interchain with G-Cter in SUMO2) cross-links involve residues Lys417, Lys441, Lys491, Lys503, Lys513, Lys529, and Lys532. MYM-type zinc fingers lie at residues 421–456 (NKSRCTICGKLTEIRHEVSFKNMTHKLCSDHCFNRY) and 463–502 (IMNCCEQCGEYLPSKGAGNNVLVIDGQQKRFCCQSCVSEY). The MYM-type 5 zinc finger occupies 533–570 (LTTCTGCRTQCRFFDMTQCIGPNGYMEPYCSTACMNSH). Residues Lys576, Lys603, Lys649, Lys658, Lys688, Lys700, and Lys709 each participate in a glycyl lysine isopeptide (Lys-Gly) (interchain with G-Cter in SUMO2) cross-link. The MYM-type 6 zinc finger occupies 636–671 (QLKCNYCKNSFCSKPEILEWENKVHQFCSKTCSDDY). 2 MYM-type zinc fingers span residues 723–758 (RCVTCNYCSQLCKKGATKELDGVVRDFCSEDCCKKF) and 764–799 (KAARCDCCKSQGTLKERVQWRGEMKHFCDQHCLLRF). Glycyl lysine isopeptide (Lys-Gly) (interchain with G-Cter in SUMO2) cross-links involve residues Lys764, Lys788, Lys812, and Lys829. Residues Ser838 and Ser958 each carry the phosphoserine modification. Disordered regions lie at residues 983–1002 (LLKNSDPETQSSMPDVPYEP) and 1028–1064 (VFGEEYEEQPRPRSKKKGAKRKAVSGYQSHDDSSDNS). The span at 1039–1050 (PRSKKKGAKRKA) shows a compositional bias: basic residues. The residue at position 1064 (Ser1064) is a Phosphoserine. A Phosphothreonine modification is found at Thr1376.

As to quaternary structure, may be a component of a BHC histone deacetylase complex that contains HDAC1, HDAC2, HMG20B/BRAF35, KDM1A, RCOR1/CoREST, PHF21A/BHC80, ZNF198, ZNF217, ZMYM3, GSE1 and GTF2I.

It is found in the nucleus. Its function is as follows. May function as a transcription factor. In Pongo abelii (Sumatran orangutan), this protein is Zinc finger MYM-type protein 2 (ZMYM2).